The chain runs to 539 residues: Phosphoenolpyruvate carboxykinase (ATP) (539 aa).

Residues R64, Y206, and K212 each coordinate substrate. Residues K212, H231, and 247–255 (GLSGTGKTT) contribute to the ATP site. The Mn(2+) site is built by K212 and H231. A Mn(2+)-binding site is contributed by D268. ATP contacts are provided by residues E296, R332, 448-449 (RI), and T454. R332 contributes to the substrate binding site.

Belongs to the phosphoenolpyruvate carboxykinase (ATP) family. Monomer. Requires Mn(2+) as cofactor.

The protein resides in the cytoplasm. The catalysed reaction is oxaloacetate + ATP = phosphoenolpyruvate + ADP + CO2. It functions in the pathway carbohydrate biosynthesis; gluconeogenesis. Functionally, involved in the gluconeogenesis. Catalyzes the conversion of oxaloacetate (OAA) to phosphoenolpyruvate (PEP) through direct phosphoryl transfer between the nucleoside triphosphate and OAA. The sequence is that of Phosphoenolpyruvate carboxykinase (ATP) from Sodalis glossinidius (strain morsitans).